The sequence spans 165 residues: MSSHYKYPLIFTAFLLIAFCLIFFSYHLIHHVRLEYPNWQGESKDQNWEAVFTKNEDAPNEYSGKLYWIGDTIEIDNTYLESLIVKKDDEVLLSSDTEIPMHDYAGGTFSDGSAKEKSVSFLERLDEHELEGHDITIEVKWKQGNHYSASQLTLNEKTLFDEKQQ.

A helical membrane pass occupies residues 7 to 29; the sequence is YPLIFTAFLLIAFCLIFFSYHLI.

It is found in the membrane. This is an uncharacterized protein from Bacillus subtilis (strain 168).